We begin with the raw amino-acid sequence, 1330 residues long: ABC multidrug transporter mdr4 (1330 aa).

N3 is a glycosylation site (N-linked (GlcNAc...) asparagine). Transmembrane regions (helical) follow at residues 90–110, 144–164, 218–238, 243–263, 324–344, and 370–390; these read VLLI…FPLL, VLYV…HSTC, KVGL…VAFI, IAGM…GGGH, HAAQ…LAFW, and IFVL…IHVF. The ABC transmembrane type-1 1 domain maps to 94–392; the sequence is IGGLLFAICA…VAPFIHVFAS (299 aa). Residues 428–666 form the ABC transporter 1 domain; it reads IRFRDVHFKY…GGVYAEMVRL (239 aa). 463-470 is a binding site for ATP; it reads GPSGGGKS. Residue N707 is glycosylated (N-linked (GlcNAc...) asparagine). Residues 717 to 736 are disordered; sequence VADTPSDSRDGSEEEARKKR. Residues 722 to 733 show a composition bias toward basic and acidic residues; the sequence is SDSRDGSEEEAR. 6 consecutive transmembrane segments (helical) span residues 761–781, 806–826, 871–893, 903–923, 989–1009, and 1023–1043; these read LLGL…AIVF, LLFF…GCAF, ASAL…VNLI, AWKI…SGMM, AWLA…YWWG, and FFIV…MFAL. The region spanning 761–1049 is the ABC transmembrane type-1 2 domain; it reads LLGLAMSVII…MFALAPDISK (289 aa). The ABC transporter 2 domain occupies 1086 to 1325; the sequence is AQLRDVHFTY…SETYRTSVIH (240 aa). An ATP-binding site is contributed by 1121–1128; sequence GPSGSGKS.

The protein belongs to the ABC transporter superfamily. ABCB family. Multidrug resistance exporter (TC 3.A.1.201) subfamily.

The protein localises to the cell membrane. The enzyme catalyses itraconazole(in) + ATP + H2O = itraconazole(out) + ADP + phosphate + H(+). The catalysed reaction is voriconazole(in) + ATP + H2O = voriconazole(out) + ADP + phosphate + H(+). Pleiotropic ABC efflux transporter that confers resistance to azoles such as itraconazole and voriconazole. The protein is ABC multidrug transporter mdr4 of Aspergillus fumigatus (strain ATCC MYA-4609 / CBS 101355 / FGSC A1100 / Af293) (Neosartorya fumigata).